We begin with the raw amino-acid sequence, 327 residues long: Nocardicin C-9' epimerase (327 aa).

At Lys43 the chain carries N6-(pyridoxal phosphate)lysine.

The protein belongs to the ACC deaminase/D-cysteine desulfhydrase family. Pyridoxal 5'-phosphate is required as a cofactor.

It carries out the reaction isonocardicin C = nocardicin C. The catalysed reaction is isonocardicin A = nocardicin A. It functions in the pathway antibiotic biosynthesis. Functionally, involved in the biosynthesis of the beta-lactam antibiotic nocardicin A. Catalyzes the interconversion of the nocardicin homoseryl side chain in both nocardicin A with isonocardicin A, and nocardicin C with isonocardicin C. The polypeptide is Nocardicin C-9' epimerase (Nocardia uniformis subsp. tsuyamanensis).